Reading from the N-terminus, the 262-residue chain is MAPALLLVPAALASFILAFGTGVEFVRFTSLRPLLGGIPESGGPDARHGWLAALQDRSILASLAWDLCLLLLFVVQHSLMATEAVKAWTSRYFGVLQRSLYVACTALALQLVMRYWETTPRGPVLWEARAEPWATWVPLLCFVLHVVSWLLIFSILLVFDYAELMGLKQVYYHVLGLGEPLSLKSPRALRLFSHLRHPVCVELLTVLWVVPTLGTDRLLLALLFTLYLGLAHGLDQQDLRYLRSQLQRKLHLLSRPQDGEAE.

Residues 1–4 lie on the Nuclear side of the membrane; sequence MAPA. Residues 5–28 traverse the membrane as a helical segment; that stretch reads LLLVPAALASFILAFGTGVEFVRF. The Perinuclear space portion of the chain corresponds to 29-58; sequence TSLRPLLGGIPESGGPDARHGWLAALQDRS. The chain crosses the membrane as a helical span at residues 59-80; it reads ILASLAWDLCLLLLFVVQHSLM. The Nuclear segment spans residues 81–97; sequence ATEAVKAWTSRYFGVLQ. Residues 98-114 traverse the membrane as a helical segment; it reads RSLYVACTALALQLVMR. Over 115-133 the chain is Perinuclear space; that stretch reads YWETTPRGPVLWEARAEPW. The chain crosses the membrane as a helical span at residues 134–164; sequence ATWVPLLCFVLHVVSWLLIFSILLVFDYAEL. The Nuclear segment spans residues 165–191; that stretch reads MGLKQVYYHVLGLGEPLSLKSPRALRL. A helical membrane pass occupies residues 192 to 210; sequence FSHLRHPVCVELLTVLWVV. Topologically, residues 211–216 are perinuclear space; it reads PTLGTD. A helical membrane pass occupies residues 217–234; it reads RLLLALLFTLYLGLAHGL. Topologically, residues 235–262 are nuclear; the sequence is DQQDLRYLRSQLQRKLHLLSRPQDGEAE.

Belongs to the nurim family.

The protein localises to the nucleus inner membrane. The polypeptide is Nurim (Nrm) (Mus musculus (Mouse)).